A 377-amino-acid polypeptide reads, in one-letter code: Ribosomal RNA large subunit methyltransferase G (377 aa).

The protein belongs to the methyltransferase superfamily. RlmG family.

It localises to the cytoplasm. The enzyme catalyses guanosine(1835) in 23S rRNA + S-adenosyl-L-methionine = N(2)-methylguanosine(1835) in 23S rRNA + S-adenosyl-L-homocysteine + H(+). Its function is as follows. Specifically methylates the guanine in position 1835 (m2G1835) of 23S rRNA. This Aeromonas salmonicida (strain A449) protein is Ribosomal RNA large subunit methyltransferase G.